Consider the following 181-residue polypeptide: Adenine phosphoribosyltransferase (181 aa).

The protein belongs to the purine/pyrimidine phosphoribosyltransferase family. In terms of assembly, homodimer.

The protein localises to the cytoplasm. The enzyme catalyses AMP + diphosphate = 5-phospho-alpha-D-ribose 1-diphosphate + adenine. The protein operates within purine metabolism; AMP biosynthesis via salvage pathway; AMP from adenine: step 1/1. Its function is as follows. Catalyzes a salvage reaction resulting in the formation of AMP, that is energically less costly than de novo synthesis. In Chelativorans sp. (strain BNC1), this protein is Adenine phosphoribosyltransferase.